The chain runs to 250 residues: Flavin-dependent thymidylate synthase (250 aa).

The region spanning 7-233 (LRVQLIAKTE…PQVFSDFEIV (227 aa)) is the ThyX domain. Residues Ser-71, 95-97 (RHR), and Gln-103 each bind FAD. DUMP contacts are provided by residues 92-95 (ELIR), 103-107 (QLSQR), and Arg-172. The short motif at 95 to 105 (RHRHFSYSQLS) is the ThyX motif element. Residues 188 to 190 (NYR) and His-194 contribute to the FAD site. Residue Arg-199 coordinates dUMP. Arg-199 functions as the Involved in ionization of N3 of dUMP, leading to its activation in the catalytic mechanism.

The protein belongs to the thymidylate synthase ThyX family. In terms of assembly, homotetramer. It depends on FAD as a cofactor.

It carries out the reaction dUMP + (6R)-5,10-methylene-5,6,7,8-tetrahydrofolate + NADPH + H(+) = dTMP + (6S)-5,6,7,8-tetrahydrofolate + NADP(+). It functions in the pathway pyrimidine metabolism; dTTP biosynthesis. Catalyzes the reductive methylation of 2'-deoxyuridine-5'-monophosphate (dUMP) to 2'-deoxythymidine-5'-monophosphate (dTMP) while utilizing 5,10-methylenetetrahydrofolate (mTHF) as the methyl donor, and NADPH and FADH(2) as the reductant. The protein is Flavin-dependent thymidylate synthase of Mycolicibacterium vanbaalenii (strain DSM 7251 / JCM 13017 / BCRC 16820 / KCTC 9966 / NRRL B-24157 / PYR-1) (Mycobacterium vanbaalenii).